Consider the following 203-residue polypeptide: Putative 3-methyladenine DNA glycosylase (203 aa).

Belongs to the DNA glycosylase MPG family.

In Staphylococcus saprophyticus subsp. saprophyticus (strain ATCC 15305 / DSM 20229 / NCIMB 8711 / NCTC 7292 / S-41), this protein is Putative 3-methyladenine DNA glycosylase.